Here is a 384-residue protein sequence, read N- to C-terminus: Calreticulin-3 (384 aa).

An N-terminal signal peptide occupies residues 1–19; that stretch reads MARALVQLWAICMLRVALA. Residues 20–197 are N-domain; the sequence is TVYFQEEFLD…GQSIESGSIE (178 aa). Asparagine 42 is a glycosylation site (N-linked (GlcNAc...) asparagine). A disulfide bridge connects residues cysteine 105 and cysteine 137. Residues tyrosine 109, lysine 111, tyrosine 128, and aspartate 135 each coordinate an alpha-D-glucoside. Repeat copies occupy residues 191 to 202, 208 to 219, 221 to 230, 234 to 245, 249 to 259, 263 to 271, and 273 to 283. The tract at residues 191-245 is 4 X approximate repeats; the sequence is IESGSIEYDWNLTSLKKETSPAESKDWEQTKDNKAQDWEKHFLDASTSKQSDWNG. The P-domain stretch occupies residues 198–294; it reads YDWNLTSLKK…YLTQYDLSEF (97 aa). Asparagine 201 carries N-linked (GlcNAc...) asparagine glycosylation. The interval 249-283 is 3 X approximate repeats; sequence GDWPAPMLQKPPYQDGLKPEGIHKDVWLHRKMKNT. The C-domain stretch occupies residues 295 to 384; sequence ENIGAIGLEL…FNQFHRRNEL (90 aa). An alpha-D-glucoside is bound at residue glutamate 303. The short motif at 381-384 is the Prevents secretion from ER element; it reads RNEL.

Belongs to the calreticulin family. In terms of assembly, component of an EIF2 complex at least composed of CELF1/CUGBP1, CALR, CALR3, EIF2S1, EIF2S2, HSP90B1 and HSPA5. Testis specific.

The protein localises to the endoplasmic reticulum lumen. Functionally, during spermatogenesis, may act as a lectin-independent chaperone for specific client proteins such as ADAM3. Required for sperm fertility. CALR3 capacity for calcium-binding may be absent or much lower than that of CALR. The polypeptide is Calreticulin-3 (CALR3) (Homo sapiens (Human)).